The sequence spans 339 residues: Dipeptide transport system permease protein DppB (339 aa).

The Periplasmic portion of the chain corresponds to methionine 1–leucine 9. A helical transmembrane segment spans residues glycine 10 to isoleucine 30. Over proline 31–leucine 102 the chain is Cytoplasmic. One can recognise an ABC transmembrane type-1 domain in the interval phenylalanine 96 to tyrosine 328. The chain crosses the membrane as a helical span at residues glycine 103–valine 123. Topologically, residues lysine 124–glycine 135 are periplasmic. A helical transmembrane segment spans residues leucine 136–valine 156. Topologically, residues serine 157–aspartate 171 are cytoplasmic. The helical transmembrane segment at methionine 172–tryptophan 192 threads the bilayer. Residues glycine 193–aspartate 200 lie on the Periplasmic side of the membrane. A helical membrane pass occupies residues alanine 201–valine 221. The Cytoplasmic portion of the chain corresponds to arginine 222 to alanine 259. A helical transmembrane segment spans residues methionine 260–leucine 280. The Periplasmic segment spans residues threonine 281 to glycine 309. Residues valine 310–valine 330 form a helical membrane-spanning segment. Residues valine 331–lysine 339 lie on the Cytoplasmic side of the membrane.

Belongs to the binding-protein-dependent transport system permease family. OppBC subfamily. In terms of assembly, the complex is composed of two ATP-binding proteins (DppD and DppF), two transmembrane proteins (DppB and DppC) and a solute-binding protein (DppA).

Its subcellular location is the cell inner membrane. Part of the ABC transporter DppABCDF involved in dipeptide transport. Responsible for the translocation of the substrate across the membrane. The sequence is that of Dipeptide transport system permease protein DppB (dppB) from Escherichia coli O157:H7.